The following is a 511-amino-acid chain: Xylose import ATP-binding protein XylG (511 aa).

ABC transporter domains follow at residues 6–244 (LEMR…VGRE) and 261–506 (FEAR…IGKP). Residue 38 to 45 (GENGAGKS) coordinates ATP.

Belongs to the ABC transporter superfamily. Xylose importer (TC 3.A.1.2.4) family. As to quaternary structure, the complex is composed of two ATP-binding proteins (XylG), two transmembrane proteins (XylH) and a solute-binding protein (XylF).

Its subcellular location is the cell inner membrane. It catalyses the reaction D-xylose(out) + ATP + H2O = D-xylose(in) + ADP + phosphate + H(+). Functionally, part of the ABC transporter complex XylFGH involved in xylose import. Responsible for energy coupling to the transport system. The sequence is that of Xylose import ATP-binding protein XylG from Brucella suis biovar 1 (strain 1330).